A 617-amino-acid chain; its full sequence is Zinc finger protein 221 (617 aa).

The KRAB domain occupies 30–100 (VTFKDVAVVF…KTTSQREGNS (71 aa)). C2H2-type zinc fingers lie at residues 170–192 (YRCNECKQSFSDVSVFDLHQQSH), 198–220 (HTCGECGKSFCYSPALHIHQRVH), and 226–248 (YKCDVCGKEFNQSSHLQTHQRVH). The C2H2-type 4; degenerate zinc finger occupies 254 to 276 (FKCGQCGKGFHSRSALNVHCKLH). C2H2-type zinc fingers lie at residues 282-304 (YNCEECGKAFIHDSQLQEHQRIH), 310-332 (FKCDICGKSFRVRSRLNRHSMVH), 338-360 (FRCDTCGKNFRQRSALNSHSMVH), 366-388 (YKCEQCGKGFICRRDFCKHQMVH), 394-416 (YNCKECGKTFRWSSCLLNHQQVH), 422-444 (FKCEECGKGFYTNSRRSSHQRSH), 450-472 (YNCEECGKDYKRRLDLEFHQRVH), 478-500 (YNCKECGKSFGWASCLLKHQRLH), 506-528 (FKCEECGKRFTQSSQLHSHQTCH), 534-556 (YKCEQCEKGYNSKFNLDMHQRVH), and 562-584 (YNCKECGKSFGWASCLLKHQRLH).

It belongs to the krueppel C2H2-type zinc-finger protein family.

Its subcellular location is the nucleus. Functionally, may be involved in transcriptional regulation. This is Zinc finger protein 221 (ZNF221) from Homo sapiens (Human).